We begin with the raw amino-acid sequence, 317 residues long: MNCTRVLQILNPRPMPSPIMPVDVAMRICLAHSPPLRSFLSSYEDCKSRNLVNQYKPLRSCISSKTEDDTANITWKSPETKAKKKVVFADSKGMSLTAVHVFKEFEEDLMLDLQFELSDLEDAIVGLKAEKEKNFSLGFPQPAADYLDFRNRLKKNLVCLENCIIQERSVTGTVKVSNVSFEKVVHVRITFDSWKSHTDIPCTYMNNVYGCEDVDTFSFSIDLPSFVAPHEQVEFCLSYKTHDMTYWDNNDGKNYKLVHTENDSSQASVIQNATTDFKAQGKRPDMEFDQFGSPRTSSGFFPEWQSWGHIENNTPYW.

The region spanning 150-258 (RNRLKKNLVC…NNDGKNYKLV (109 aa)) is the CBM21 domain.

In terms of assembly, interacts with PPP1CC catalytic subunit of PP1 and associates with glycogen. Forms complexes with glycogen phosphorylase, glycogen synthase and phosphorylase kinase which is necessary for its regulation of PP1 activity.

Functionally, acts as a glycogen-targeting subunit for PP1 and regulates its activity. Activates glycogen synthase, reduces glycogen phosphorylase activity and limits glycogen breakdown. In Danio rerio (Zebrafish), this protein is Protein phosphatase 1 regulatory subunit 3C-B (ppp1r3cb).